Here is a 449-residue protein sequence, read N- to C-terminus: Elongation factor 1-alpha 1 (449 aa).

Residues 5 to 230 form the tr-type G domain; the sequence is KFHINIVVIG…DQINEPKRPS (226 aa). A G1 region spans residues 14–21; the sequence is GHVDSGKS. 14-21 is a GTP binding site; sequence GHVDSGKS. The residue at position 55 (K55) is an N6,N6-dimethyllysine. Positions 70–74 are G2; the sequence is GITID. Residue K79 is modified to N6,N6,N6-trimethyllysine. The interval 91–94 is G3; sequence DAPG. Residues 91–95 and 153–156 contribute to the GTP site; these read DAPGH and NKMD. The tract at residues 153–156 is G4; the sequence is NKMD. An N6,N6,N6-trimethyllysine modification is found at K187. The interval 194 to 196 is G5; it reads SGF. Residue K261 is modified to N6-methyllysine. An N6,N6,N6-trimethyllysine mark is found at K306 and K396. Residues K438 and K441 each participate in a glycyl lysine isopeptide (Lys-Gly) (interchain with G-Cter in ubiquitin) cross-link.

Belongs to the TRAFAC class translation factor GTPase superfamily. Classic translation factor GTPase family. EF-Tu/EF-1A subfamily.

Its subcellular location is the cytoplasm. Functionally, this protein promotes the GTP-dependent binding of aminoacyl-tRNA to the A-site of ribosomes during protein biosynthesis. The polypeptide is Elongation factor 1-alpha 1 (A1) (Arabidopsis thaliana (Mouse-ear cress)).